We begin with the raw amino-acid sequence, 343 residues long: Small ribosomal subunit biogenesis GTPase RsgA (343 aa).

One can recognise a CP-type G domain in the interval 116–275 (RGQLKPVAAN…LIDSPGIREF (160 aa)). Residues 163 to 166 (NKAD) and 217 to 225 (GQSGVGKSS) each bind GTP. The Zn(2+) site is built by C299, C304, H306, and C312.

This sequence belongs to the TRAFAC class YlqF/YawG GTPase family. RsgA subfamily. As to quaternary structure, monomer. Associates with 30S ribosomal subunit, binds 16S rRNA. The cofactor is Zn(2+).

It is found in the cytoplasm. One of several proteins that assist in the late maturation steps of the functional core of the 30S ribosomal subunit. Helps release RbfA from mature subunits. May play a role in the assembly of ribosomal proteins into the subunit. Circularly permuted GTPase that catalyzes slow GTP hydrolysis, GTPase activity is stimulated by the 30S ribosomal subunit. The chain is Small ribosomal subunit biogenesis GTPase RsgA from Pseudomonas syringae pv. tomato (strain ATCC BAA-871 / DC3000).